A 246-amino-acid polypeptide reads, in one-letter code: DNA repair protein RecO (246 aa).

It belongs to the RecO family.

In terms of biological role, involved in DNA repair and RecF pathway recombination. The sequence is that of DNA repair protein RecO from Methylorubrum populi (strain ATCC BAA-705 / NCIMB 13946 / BJ001) (Methylobacterium populi).